A 480-amino-acid chain; its full sequence is Bindin (480 aa).

The signal sequence occupies residues 1 to 20; sequence MDSQVLPLILLIIVFAASSA. Residues 21 to 247 constitute a propeptide that is removed on maturation; sequence HGHFPHRTNQ…GEMRAERQRR (227 aa). The disordered stretch occupies residues 161-211; that stretch reads AEMRHRRSAKDDDVNKRASPRKGSSPAGKKVQIMEQDAGKGDAHNEKEVVK. Residues 197–211 show a composition bias toward basic and acidic residues; it reads DAGKGDAHNEKEVVK. Residues 377-385 form a fucose-binding domain region; it reads LRHLRHHSN. A helical transmembrane segment spans residues 431 to 451; that stretch reads GAGAVAGAAMAAGMPPYPGGA. The disordered stretch occupies residues 452–480; that stretch reads QGGMRVGGQPQNPMGGNAYNPMTGYRQQG.

Belongs to the bindin family.

Its subcellular location is the cytoplasmic vesicle. It localises to the secretory vesicle. The protein localises to the acrosome membrane. Functionally, species-specific sea urchin sperm protein required for adhesion of sperm to the egg surface during fertilization. Bindin coats the acrosomal process after it is externalized by the acrosome reaction. It binds to sulfated, fucose-containing polysaccharides on the vitelline layer receptor proteoglycans which cover the egg plasma membrane. The chain is Bindin from Arbacia punctulata (Punctuate sea urchin).